The chain runs to 140 residues: Small ribosomal subunit protein uS12 (140 aa).

The segment at 1 to 44 (MPTFNQLVRKGRKTMEKNSQAPALQKGFNSLRKKTTDASAPQKR) is disordered. Asp102 is subject to 3-methylthioaspartic acid. The interval 120–140 (VAKRRQARSKYGAKRPKEAKK) is disordered. Residues 121 to 140 (AKRRQARSKYGAKRPKEAKK) show a composition bias toward basic residues.

It belongs to the universal ribosomal protein uS12 family. Part of the 30S ribosomal subunit. Contacts proteins S8 and S17. May interact with IF1 in the 30S initiation complex.

Its function is as follows. With S4 and S5 plays an important role in translational accuracy. In terms of biological role, interacts with and stabilizes bases of the 16S rRNA that are involved in tRNA selection in the A site and with the mRNA backbone. Located at the interface of the 30S and 50S subunits, it traverses the body of the 30S subunit contacting proteins on the other side and probably holding the rRNA structure together. The combined cluster of proteins S8, S12 and S17 appears to hold together the shoulder and platform of the 30S subunit. The polypeptide is Small ribosomal subunit protein uS12 (Lachnoclostridium phytofermentans (strain ATCC 700394 / DSM 18823 / ISDg) (Clostridium phytofermentans)).